We begin with the raw amino-acid sequence, 430 residues long: Glutamate-1-semialdehyde 2,1-aminomutase (430 aa).

At Lys267 the chain carries N6-(pyridoxal phosphate)lysine.

This sequence belongs to the class-III pyridoxal-phosphate-dependent aminotransferase family. HemL subfamily. In terms of assembly, homodimer. Pyridoxal 5'-phosphate is required as a cofactor.

It localises to the cytoplasm. It carries out the reaction (S)-4-amino-5-oxopentanoate = 5-aminolevulinate. It functions in the pathway porphyrin-containing compound metabolism; protoporphyrin-IX biosynthesis; 5-aminolevulinate from L-glutamyl-tRNA(Glu): step 2/2. In Anaeromyxobacter sp. (strain K), this protein is Glutamate-1-semialdehyde 2,1-aminomutase.